A 208-amino-acid polypeptide reads, in one-letter code: MATSAVPSDNLPTYKLVVVGDGGVGKSALTIQFFQKIFVPDYDPTIEDSYLKHTEIDNQWAILDVLDTAGQEEFSAMREQYMRTGDGFLIVYSVTDKASFEHVDRFHQLILRVKDRESFPMILVANKVDLMHLRKVTRDQGKEMATKYNIPYIETSAKDPPLNVDKTFHDLVRVIRQQVPEKNQKKKKKTKWRGDRATGTHKLQCVIL.

Residues Asp21, Gly22, Gly23, Val24, Gly25, Lys26, Ser27, Ala28, Phe38, Val39, Pro40, Tyr42, Pro44, and Thr45 each coordinate GTP. Ser27 is a binding site for Mg(2+). An Effector region motif is present at residues 42–50 (YDPTIEDSY). The Mg(2+) site is built by Thr45 and Asp67. Gly70, Asn126, Lys127, Asp129, Ser156, Ala157, and Lys158 together coordinate GTP. The residue at position 205 (Cys205) is a Cysteine methyl ester. Cys205 is lipidated: S-geranylgeranyl cysteine. Positions 206 to 208 (VIL) are cleaved as a propeptide — removed in mature form.

Belongs to the small GTPase superfamily. Ras family. In terms of assembly, component of the SHOC2-MRAS-PP1c (SMP) holophosphatase complex consisting of SHOC2, GTP-bound M-Ras/MRAS and the catalytic subunit of protein phosphatase 1 (either PPP1CA, PPP1CB or PPP1CC). Interacts (active GTP-bound form) with both SHOC2 and PP1c (all isoforms) to form a tertiary complex; SHOC2 and PP1c preferably bind M-Ras/MRAS, but they also bind K-Ras/KRAS, N-Ras/NRAS and H-Ras/HRAS. Interacts with RGL3. Interacts (active GTP-bound form preferentially) with RGS14. Requires Mg(2+) as cofactor. As to expression, expressed in skeletal muscle cells.

Its subcellular location is the cell membrane. It catalyses the reaction GTP + H2O = GDP + phosphate + H(+). Its function is as follows. Signal transducer in the Ras-MAPK signaling pathway that regulates cell proliferation and survival. Core component of the SHOC2-MRAS-PP1c (SMP) holophosphatase complex that regulates the MAPK pathway activation. The formation of the SMP complex only occurs when MRAS is GTP-bound. MRAS has low intrinsic GTPase activity and may require additional factors for activation. The SMP complex specifically dephosphorylates the inhibitory phosphorylation at 'Ser-259' of RAF1 kinase, 'Ser-365' of BRAF kinase and 'Ser-214' of ARAF kinase, stimulating their kinase activities. This Rattus norvegicus (Rat) protein is Ras-related protein M-Ras (Mras).